A 570-amino-acid polypeptide reads, in one-letter code: Dihydroxy-acid dehydratase (570 aa).

A disordered region spans residues 1 to 25 (MSQQDSPANADHRRRHSSIVVDGPG). Cysteine 60 lines the [2Fe-2S] cluster pocket. Aspartate 92 is a binding site for Mg(2+). Cysteine 133 serves as a coordination point for [2Fe-2S] cluster. The Mg(2+) site is built by aspartate 134 and lysine 135. Residue lysine 135 is modified to N6-carboxylysine. Cysteine 202 lines the [2Fe-2S] cluster pocket. Residue glutamate 453 coordinates Mg(2+). Serine 479 (proton acceptor) is an active-site residue.

This sequence belongs to the IlvD/Edd family. As to quaternary structure, homodimer. It depends on [2Fe-2S] cluster as a cofactor. Requires Mg(2+) as cofactor.

It carries out the reaction (2R)-2,3-dihydroxy-3-methylbutanoate = 3-methyl-2-oxobutanoate + H2O. It catalyses the reaction (2R,3R)-2,3-dihydroxy-3-methylpentanoate = (S)-3-methyl-2-oxopentanoate + H2O. Its pathway is amino-acid biosynthesis; L-isoleucine biosynthesis; L-isoleucine from 2-oxobutanoate: step 3/4. It functions in the pathway amino-acid biosynthesis; L-valine biosynthesis; L-valine from pyruvate: step 3/4. Functionally, functions in the biosynthesis of branched-chain amino acids. Catalyzes the dehydration of (2R,3R)-2,3-dihydroxy-3-methylpentanoate (2,3-dihydroxy-3-methylvalerate) into 2-oxo-3-methylpentanoate (2-oxo-3-methylvalerate) and of (2R)-2,3-dihydroxy-3-methylbutanoate (2,3-dihydroxyisovalerate) into 2-oxo-3-methylbutanoate (2-oxoisovalerate), the penultimate precursor to L-isoleucine and L-valine, respectively. The sequence is that of Dihydroxy-acid dehydratase from Chromohalobacter salexigens (strain ATCC BAA-138 / DSM 3043 / CIP 106854 / NCIMB 13768 / 1H11).